Consider the following 361-residue polypeptide: Monodechloroaminopyrrolnitrin synthase PrnB (361 aa).

Residue 222 to 225 (PGAV) coordinates substrate. His-313 is a binding site for heme. Substrate is bound by residues Tyr-321 and Ser-332.

It belongs to the PrnB family. Monomer. Heme b serves as cofactor.

The enzyme catalyses 7-chloro-L-tryptophan + AH2 + O2 = monodechloroaminopyrrolnitrin + A + CO2 + 2 H2O. It functions in the pathway antibiotic biosynthesis. Its function is as follows. Involved in the biosynthesis of the antifungal antibiotic pyrrolnitrin. Catalyzes the ring rearrangement and decarboxylation to convert 7-chloro-L-tryptophan (7-CLT) to monodechloroaminopyrrolnitrin (MDA). It can also use 7-chloro-D-tryptophan, but 7-chloro-L-tryptophan is the preferred natural enantiomer. The chain is Monodechloroaminopyrrolnitrin synthase PrnB (prnB) from Pseudomonas fluorescens.